A 408-amino-acid polypeptide reads, in one-letter code: Aspartate aminotransferase, cytoplasmic (408 aa).

L-aspartate-binding residues include Gly36, Trp133, and Asn187. An N6-(pyridoxal phosphate)lysine modification is found at Lys251. Arg379 lines the L-aspartate pocket.

Belongs to the class-I pyridoxal-phosphate-dependent aminotransferase family. As to quaternary structure, homodimer. It depends on pyridoxal 5'-phosphate as a cofactor. As to expression, expressed in all somatic tissues including the nervous system.

The protein resides in the cytoplasm. It carries out the reaction L-aspartate + 2-oxoglutarate = oxaloacetate + L-glutamate. Functionally, biosynthesis of L-glutamate from L-aspartate. Important regulator of levels of glutamate, the major excitatory neurotransmitter of the central nervous system. The polypeptide is Aspartate aminotransferase, cytoplasmic (Caenorhabditis elegans).